Reading from the N-terminus, the 151-residue chain is Ribosome maturation factor RimP (151 aa).

This sequence belongs to the RimP family.

Its subcellular location is the cytoplasm. Its function is as follows. Required for maturation of 30S ribosomal subunits. This chain is Ribosome maturation factor RimP, found in Shewanella denitrificans (strain OS217 / ATCC BAA-1090 / DSM 15013).